The primary structure comprises 234 residues: Endo-1,4-beta-xylanase 1 (234 aa).

A signal peptide spans 1 to 21; the sequence is MVSFIFTRIILFAAAINGAVA. N-linked (GlcNAc...) asparagine glycans are attached at residues N25 and N75. Residues 38–234 form the GH11 domain; the sequence is SGTPSSTGYS…SSGFSSITVA (197 aa). The active-site Nucleophile is the E124. Residue N167 is glycosylated (N-linked (GlcNAc...) asparagine). The active-site Proton donor is the E221.

The protein belongs to the glycosyl hydrolase 11 (cellulase G) family.

The protein localises to the secreted. It catalyses the reaction Endohydrolysis of (1-&gt;4)-beta-D-xylosidic linkages in xylans.. Its pathway is glycan degradation; xylan degradation. Functionally, endo-1,4-beta-xylanase involved in the hydrolysis of xylan, a major structural heterogeneous polysaccharide found in plant biomass representing the second most abundant polysaccharide in the biosphere, after cellulose. This is Endo-1,4-beta-xylanase 1 (Xyn1) from Leucoagaricus gongylophorus (Leaf-cutting ant fungus).